Consider the following 689-residue polypeptide: Glycine--tRNA ligase beta subunit (689 aa).

The protein belongs to the class-II aminoacyl-tRNA synthetase family. Tetramer of two alpha and two beta subunits.

Its subcellular location is the cytoplasm. It catalyses the reaction tRNA(Gly) + glycine + ATP = glycyl-tRNA(Gly) + AMP + diphosphate. This Pasteurella multocida (strain Pm70) protein is Glycine--tRNA ligase beta subunit (glyS).